Here is a 106-residue protein sequence, read N- to C-terminus: UPF0145 protein Pfl01_1745 (106 aa).

This sequence belongs to the UPF0145 family.

The chain is UPF0145 protein Pfl01_1745 from Pseudomonas fluorescens (strain Pf0-1).